A 769-amino-acid polypeptide reads, in one-letter code: Integrin beta-2 (769 aa).

The first 22 residues, 1–22 (MLRQRPQLLLLAGLLALQSVLS), serve as a signal peptide directing secretion. Gln-23 bears the Pyrrolidone carboxylic acid mark. At 23 to 700 (QECTNYKVST…DMLECVKGPN (678 aa)) the chain is on the extracellular side. One can recognise a PSI domain in the interval 24–74 (ECTNYKVSTCRDCIESGPGCAWCQKLNFTGQGEPDSIRCDTRAELLSKGCP). Intrachain disulfides connect Cys-25-Cys-43, Cys-33-Cys-447, Cys-36-Cys-62, Cys-46-Cys-73, Cys-191-Cys-198, Cys-246-Cys-286, Cys-386-Cys-400, Cys-420-Cys-445, Cys-449-Cys-467, Cys-459-Cys-470, Cys-472-Cys-481, Cys-483-Cys-514, Cys-497-Cys-512, Cys-506-Cys-517, Cys-519-Cys-534, Cys-536-Cys-559, Cys-541-Cys-557, Cys-549-Cys-562, Cys-564-Cys-573, Cys-575-Cys-598, Cys-582-Cys-596, Cys-590-Cys-601, Cys-603-Cys-612, Cys-615-Cys-618, Cys-622-Cys-662, Cys-628-Cys-647, Cys-631-Cys-643, and Cys-670-Cys-695. N-linked (GlcNAc...) asparagine glycans are attached at residues Asn-50 and Asn-116. Residues 124 to 363 (GYPIDLYYLM…ELIKNAYNKL (240 aa)) enclose the VWFA domain. Mg(2+)-binding residues include Ser-136 and Ser-138. Ser-138, Asp-141, Asp-142, and Asp-173 together coordinate Ca(2+). Ca(2+)-binding residues include Asn-229, Asp-231, Pro-233, and Glu-234. Glu-234 contacts Mg(2+). A glycan (N-linked (GlcNAc...) asparagine) is linked at Asn-254. 2 residues coordinate Ca(2+): Asp-264 and Glu-347. Positions 397–399 (RGD) match the Cell attachment site motif. I-EGF domains lie at 449 to 482 (CRDASRDGSICGGRGSMECGVCRCDAGYIGKNCE), 483 to 535 (CQTQ…QFCE), 536 to 574 (CDNVNCERYDGQVCGGEKRGLCFCGTCRCDEQYEGSACQ), and 575 to 613 (CLKSTQGCLNLDGVECSGRGRCRCNVCQCDPGYQPPLCS). Asn-501 carries an N-linked (GlcNAc...) asparagine glycan. N-linked (GlcNAc...) asparagine glycosylation is present at Asn-642. A helical membrane pass occupies residues 701 to 723 (IAAIVGGTVGGVVLVGILLLVIW). The Cytoplasmic portion of the chain corresponds to 724 to 769 (KALTHLSDLREYHRFEKEKLKSQWNNDNPLFKSATTTVMNPKFAES). Phosphoserine occurs at positions 745 and 756. Thr-758 and Thr-760 each carry phosphothreonine.

It belongs to the integrin beta chain family. As to quaternary structure, heterodimer of an alpha and a beta subunit. The ITGB2 beta subunit associates with the ITGAL, ITGAM, ITGAX or ITGAD alpha subunits. Found in a complex with CD177 and ITGAM/CD11b. Interacts with FGR. Interacts with COPS5 and RANBP9. Interacts with FLNA (via filamin repeats 4, 9, 12, 17, 19, 21, and 23). Interacts with THBD. Both Ser-745 and Ser-756 become phosphorylated when T-cells are exposed to phorbol esters. Phosphorylation on Thr-758 (but not on Ser-756) allows interaction with 14-3-3 proteins.

It localises to the cell membrane. The protein localises to the membrane raft. In terms of biological role, integrin ITGAL/ITGB2 is a receptor for ICAM1, ICAM2, ICAM3 and ICAM4. Integrin ITGAL/ITGB2 is also a receptor for the secreted form of ubiquitin-like protein ISG15; the interaction is mediated by ITGAL. Integrins ITGAM/ITGB2 and ITGAX/ITGB2 are receptors for the iC3b fragment of the third complement component and for fibrinogen. Integrin ITGAX/ITGB2 recognizes the sequence G-P-R in fibrinogen alpha-chain. Integrin ITGAM/ITGB2 recognizes P1 and P2 peptides of fibrinogen gamma chain. Integrin ITGAM/ITGB2 is also a receptor for factor X. Integrin ITGAD/ITGB2 is a receptor for ICAM3 and VCAM1. Contributes to natural killer cell cytotoxicity. Involved in leukocyte adhesion and transmigration of leukocytes including T-cells and neutrophils. Triggers neutrophil transmigration during lung injury through PTK2B/PYK2-mediated activation. Integrin ITGAL/ITGB2 in association with ICAM3, contributes to apoptotic neutrophil phagocytosis by macrophages. The sequence is that of Integrin beta-2 (ITGB2) from Bos taurus (Bovine).